A 2299-amino-acid polypeptide reads, in one-letter code: Protein Ycf2 (2299 aa).

Gly1642–Ser1649 contributes to the ATP binding site.

The protein belongs to the Ycf2 family.

The protein localises to the plastid. It localises to the chloroplast stroma. Its function is as follows. Probable ATPase of unknown function. Its presence in a non-photosynthetic plant (Epifagus virginiana) and experiments in tobacco indicate that it has an essential function which is probably not related to photosynthesis. The protein is Protein Ycf2 of Nandina domestica (Heavenly bamboo).